We begin with the raw amino-acid sequence, 65 residues long: ATP synthase F(0) complex subunit 8 (65 aa).

The helical transmembrane segment at 8–24 threads the bilayer; it reads TWLTTILSMFLALFIIF. K53 carries the post-translational modification N6-acetyllysine; alternate. K53 bears the N6-succinyllysine; alternate mark. The residue at position 56 (K56) is an N6-acetyllysine.

It belongs to the ATPase protein 8 family. As to quaternary structure, component of the ATP synthase complex composed at least of ATP5F1A/subunit alpha, ATP5F1B/subunit beta, ATP5MC1/subunit c (homooctomer), MT-ATP6/subunit a, MT-ATP8/subunit 8, ATP5ME/subunit e, ATP5MF/subunit f, ATP5MG/subunit g, ATP5MK/subunit k, ATP5MJ/subunit j, ATP5F1C/subunit gamma, ATP5F1D/subunit delta, ATP5F1E/subunit epsilon, ATP5PF/subunit F6, ATP5PB/subunit b, ATP5PD/subunit d, ATP5PO/subunit OSCP. ATP synthase complex consists of a soluble F(1) head domain (subunits alpha(3) and beta(3)) - the catalytic core - and a membrane F(0) domain - the membrane proton channel (subunits c, a, 8, e, f, g, k and j). These two domains are linked by a central stalk (subunits gamma, delta, and epsilon) rotating inside the F1 region and a stationary peripheral stalk (subunits F6, b, d, and OSCP). Interacts with PRICKLE3.

It localises to the mitochondrion membrane. Functionally, subunit 8, of the mitochondrial membrane ATP synthase complex (F(1)F(0) ATP synthase or Complex V) that produces ATP from ADP in the presence of a proton gradient across the membrane which is generated by electron transport complexes of the respiratory chain. ATP synthase complex consist of a soluble F(1) head domain - the catalytic core - and a membrane F(1) domain - the membrane proton channel. These two domains are linked by a central stalk rotating inside the F(1) region and a stationary peripheral stalk. During catalysis, ATP synthesis in the catalytic domain of F(1) is coupled via a rotary mechanism of the central stalk subunits to proton translocation. In vivo, can only synthesize ATP although its ATP hydrolase activity can be activated artificially in vitro. Part of the complex F(0) domain. The protein is ATP synthase F(0) complex subunit 8 of Capra ibex ibex (Alpine ibex).